Consider the following 477-residue polypeptide: Glycogen synthase (477 aa).

Lys15 serves as a coordination point for ADP-alpha-D-glucose.

It belongs to the glycosyltransferase 1 family. Bacterial/plant glycogen synthase subfamily.

The enzyme catalyses [(1-&gt;4)-alpha-D-glucosyl](n) + ADP-alpha-D-glucose = [(1-&gt;4)-alpha-D-glucosyl](n+1) + ADP + H(+). It participates in glycan biosynthesis; glycogen biosynthesis. Its function is as follows. Synthesizes alpha-1,4-glucan chains using ADP-glucose. The polypeptide is Glycogen synthase (Shigella flexneri).